We begin with the raw amino-acid sequence, 775 residues long: MGRGSGTFERLLDKATSQLLLETDWESILQICDLIRQGDTQAKYAVNSIKKKVNDKNPHVALYALEVMESVVKNCGQTVHDEVANKQTMEELKELLKRQVEVNVRNKILYLIQAWAHAFRNEPKYKVVQDTYQIMKVEGHVFPEFKESDAMFAAERAPDWVDAEECHRCRVQFGVVTRKHHCRACGQIFCGKCSSKYSTIPKFGIEKEVRVCEPCYEQLNKKAEGKASSTTELPPEYLTSPLSQQSQLPPKRDETALQEEEELQLALALSQSEAEEKERMRQKTTYTAHPKAEPTPLASSAPPAGSLYSSPVNSSAPLAEDIDPELARYLNRNYWEKKQEEARKSPTPSAPVPLTEPAAQPGEGHTAPNSMAEAPLPETDSQPITPCSGPFSEYQNGESEESHEQFLKALQNAVSTFVNRMKSNHMRGRSITNDSAVLSLFQSINTMHPQLLELLNQLDERRLYYEGLQDKLAQIRDARGALSALREEHREKLRRAAEEAERQRQIQLAQKLEIMRQKKQEYLEVQRQLAIQRLQEQEKERQMRLEQQKQTVQMRAQMPAFPLPYAQLQAMPTAGGVLYQPSGPTSFPATFSPAGSVEGSPMHGVYMSQPAPATGPYPSMPGTTADPSMVSAYMYPTGAPGAQAAPQAQAGPTTSPAYSSYQPTPTPGYQSVASQAPQSLPAISQPPQTSNIGYMGSQPMSMGYQPYNMQNLMTALPGQDASLPAQQPYIPGQQPLYQQMAPSTGPPQQQPPVAQPAPTQGPPAQGSEAQLISFD.

In terms of domain architecture, VHS spans 15–143 (ATSQLLLETD…IMKVEGHVFP (129 aa)). Residues 160–220 (WVDAEECHRC…VCEPCYEQLN (61 aa)) form an FYVE-type zinc finger. Positions 166, 169, 182, 185, 190, and 193 each coordinate Zn(2+). An N6-acetyllysine modification is found at lysine 207. The Zn(2+) site is built by cysteine 212 and cysteine 215. At tyrosine 216 the chain carries Phosphotyrosine. A disordered region spans residues 223–319 (AEGKASSTTE…SPVNSSAPLA (97 aa)). The interval 225 to 541 (GKASSTTELP…QRLQEQEKER (317 aa)) is interaction with SNX1. Residues 258-277 (QEEEELQLALALSQSEAEEK) enclose the UIM domain. The span at 307–316 (LYSSPVNSSA) shows a compositional bias: polar residues. Tyrosine 308, tyrosine 329, and tyrosine 334 each carry phosphotyrosine. A disordered region spans residues 338-405 (KQEEARKSPT…NGESEESHEQ (68 aa)). Residues 443-541 (SINTMHPQLL…QRLQEQEKER (99 aa)) are interaction with SNAP25 and TRAK2. Residues 452–570 (LELLNQLDER…FPLPYAQLQA (119 aa)) are interaction with STAM. The tract at residues 478–775 (ARGALSALRE…GSEAQLISFD (298 aa)) is interaction with NF2. Lysine 549 is modified (N6-succinyllysine). Residues 640-657 (PGAQAAPQAQAGPTTSPA) show a composition bias toward low complexity. Disordered regions lie at residues 640–690 (PGAQ…PQTS) and 719–775 (QDAS…ISFD). The span at 658 to 690 (YSSYQPTPTPGYQSVASQAPQSLPAISQPPQTS) shows a compositional bias: polar residues. Over residues 744-761 (TGPPQQQPPVAQPAPTQG) the composition is skewed to pro residues.

As to quaternary structure, component of the ESCRT-0 complex composed of STAM or STAM2 and HGS. Part of a complex at least composed of HSG, STAM2 (or probably STAM) and EPS15. Interacts with STAM. Interacts with STAM2. Interacts with EPS15; the interaction is direct, calcium-dependent and inhibited by SNAP25. Identified in a complex with STAM and LITAF. Found in a complex with STAM and E3 ligase ITCH and DTX3L. Interacts with E3 ligase DTX3L; the interaction brings together STAM and HSG, promotes their recruitment to early endosomes and decreases STAM and HGS ubiquitination by ITCH. Interacts with NF2; the interaction is direct. Interacts with ubiquitin; the interaction is direct. Interacts with VPS37C. Interacts with SMAD1, SMAD2 and SMAD3. Interacts with TSG101; the interaction mediates the association with the ESCRT-I complex. Interacts with SNAP25; the interaction is direct and decreases with addition of increasing concentrations of free calcium. Interacts with SNX1; the interaction is direct. Component of a 550 kDa membrane complex at least composed of HGS and SNX1 but excluding EGFR. Interacts with TRAK1. Interacts with TRAK2. Component of the CART complex, at least composed of ACTN4, HGS/HRS, MYO5B and TRIM3. Interacts with ARRDC3. Identified in a complex containing at least ARRDC4, AVPR2 and HGS. Interacts (via UIM domain) with UBQLN1 (via ubiquitin-like domain). Interacts with LAPTM4B; promotes HGS ubiquitination. Phosphorylated on Tyr-334. This phosphorylation occurs in response to EGF. A minor site of phosphorylation on Tyr-329 is detected. Protein phosphorylation may also be triggered in response to IL-2, GM-CSF and HGF. In terms of processing, ubiquitinated by ITCH. In terms of tissue distribution, ubiquitous expression in adult and fetal tissues with higher expression in testis.

The protein localises to the cytoplasm. Its subcellular location is the early endosome membrane. It localises to the endosome. It is found in the multivesicular body membrane. In terms of biological role, involved in intracellular signal transduction mediated by cytokines and growth factors. When associated with STAM, it suppresses DNA signaling upon stimulation by IL-2 and GM-CSF. Could be a direct effector of PI3-kinase in vesicular pathway via early endosomes and may regulate trafficking to early and late endosomes by recruiting clathrin. May concentrate ubiquitinated receptors within clathrin-coated regions. Involved in down-regulation of receptor tyrosine kinase via multivesicular body (MVBs) when complexed with STAM (ESCRT-0 complex). The ESCRT-0 complex binds ubiquitin and acts as a sorting machinery that recognizes ubiquitinated receptors and transfers them to further sequential lysosomal sorting/trafficking processes. May contribute to the efficient recruitment of SMADs to the activin receptor complex. Involved in receptor recycling via its association with the CART complex, a multiprotein complex required for efficient transferrin receptor recycling but not for EGFR degradation. This is Hepatocyte growth factor-regulated tyrosine kinase substrate (Hgs) from Mus musculus (Mouse).